Here is a 93-residue protein sequence, read N- to C-terminus: Stromal cell-derived factor 1 (93 aa).

Positions 1–21 are cleaved as a signal peptide; sequence MNAKVVVVLVLVLTALCLSDG. Residues 22–23 carry the Receptor activation motif motif; it reads KP. Residues 29–33 are receptor and heparin binding; that stretch reads RCPCR. 2 cysteine pairs are disulfide-bonded: Cys-30–Cys-55 and Cys-32–Cys-71. Receptor binding stretches follow at residues 39 to 41, 48 to 50, and 60 to 70; these read VAR, KIL, and VARLKNNNRQV. Heparin contacts are provided by residues 41 to 51, Arg-62, Gln-69, and Lys-85; that span reads RANVKHLKILN.

It belongs to the intercrine alpha (chemokine CxC) family. As to quaternary structure, monomer or homodimer; in equilibrium. Dimer formation is induced by non acidic pH and the presence of multivalent anions, and by binding to CXCR4 or heparin. Monomeric form is required for full chemotactic activity and resistance to ischemia/reperfusion injury, whereas the dimeric form acts as a partial agonist of CXCR4, stimulating Ca2+ mobilization but with no chemotactic activity and instead acts as a selective antagonist that blocks chemotaxis induced by the monomeric form. Interacts with the N-terminus of ACKR3. Interacts with integrin subunit ITGB3 (via the allosteric site (site 2)). Interacts with TNFAIP6 (via Link domain). (Microbial infection) Interacts with molluscum contagiosum virus protein MC148. In terms of processing, processed forms SDF-1-beta(3-72) and SDF-1-alpha(3-67) are produced after secretion by proteolytic cleavage of isoforms Beta and Alpha, respectively. The N-terminal processing is probably achieved by DPP4. Isoform Alpha is first cleaved at the C-terminus to yield a SDF-1-alpha(1-67) intermediate before being processed at the N-terminus. The C-terminal processing of isoform Alpha is reduced by binding to heparin and, probably, cell surface proteoglycans. As to expression, isoform Alpha and isoform Beta are ubiquitously expressed, with highest levels detected in liver, pancreas and spleen. Isoform Gamma is mainly expressed in heart, with weak expression detected in several other tissues. Isoform Delta, isoform Epsilon and isoform Theta have highest expression levels in pancreas, with lower levels detected in heart, kidney, liver and spleen.

It localises to the secreted. Chemoattractant active on T-lymphocytes and monocytes but not neutrophils. Activates the C-X-C chemokine receptor CXCR4 to induce a rapid and transient rise in the level of intracellular calcium ions and chemotaxis. SDF-1-beta(3-72) and SDF-1-alpha(3-67) show a reduced chemotactic activity. Binding to cell surface proteoglycans seems to inhibit formation of SDF-1-alpha(3-67) and thus to preserve activity on local sites. Also binds to atypical chemokine receptor ACKR3, which activates the beta-arrestin pathway and acts as a scavenger receptor for SDF-1. Binds to the allosteric site (site 2) of integrins and activates integrins ITGAV:ITGB3, ITGA4:ITGB1 and ITGA5:ITGB1 in a CXCR4-independent manner. Acts as a positive regulator of monocyte migration and a negative regulator of monocyte adhesion via the LYN kinase. Stimulates migration of monocytes and T-lymphocytes through its receptors, CXCR4 and ACKR3, and decreases monocyte adherence to surfaces coated with ICAM-1, a ligand for beta-2 integrins. SDF1A/CXCR4 signaling axis inhibits beta-2 integrin LFA-1 mediated adhesion of monocytes to ICAM-1 through LYN kinase. Inhibits CXCR4-mediated infection by T-cell line-adapted HIV-1. Plays a protective role after myocardial infarction. Induces down-regulation and internalization of ACKR3 expressed in various cells. Has several critical functions during embryonic development; required for B-cell lymphopoiesis, myelopoiesis in bone marrow and heart ventricular septum formation. Stimulates the proliferation of bone marrow-derived B-cell progenitors in the presence of IL7 as well as growth of stromal cell-dependent pre-B-cells. The chain is Stromal cell-derived factor 1 (CXCL12) from Homo sapiens (Human).